Here is a 440-residue protein sequence, read N- to C-terminus: Ribosomal protein uS12 methylthiotransferase RimO (440 aa).

The MTTase N-terminal domain occupies 2-117 (VKVGFVSLGC…LPNVIKKLYE (116 aa)). [4Fe-4S] cluster is bound by residues Cys11, Cys47, Cys80, Cys156, Cys160, and Cys163. A Radical SAM core domain is found at 142-371 (ATPKFYAYIK…LNLQRKISLE (230 aa)). Residues 374 to 440 (RKRISKKYEV…FEYDLVGEVI (67 aa)) enclose the TRAM domain.

The protein belongs to the methylthiotransferase family. RimO subfamily. Requires [4Fe-4S] cluster as cofactor.

The protein resides in the cytoplasm. The enzyme catalyses L-aspartate(89)-[ribosomal protein uS12]-hydrogen + (sulfur carrier)-SH + AH2 + 2 S-adenosyl-L-methionine = 3-methylsulfanyl-L-aspartate(89)-[ribosomal protein uS12]-hydrogen + (sulfur carrier)-H + 5'-deoxyadenosine + L-methionine + A + S-adenosyl-L-homocysteine + 2 H(+). Catalyzes the methylthiolation of an aspartic acid residue of ribosomal protein uS12. This chain is Ribosomal protein uS12 methylthiotransferase RimO, found in Caldicellulosiruptor saccharolyticus (strain ATCC 43494 / DSM 8903 / Tp8T 6331).